A 459-amino-acid chain; its full sequence is Argininosuccinate lyase (459 aa).

Belongs to the lyase 1 family. Argininosuccinate lyase subfamily.

The protein localises to the cytoplasm. The enzyme catalyses 2-(N(omega)-L-arginino)succinate = fumarate + L-arginine. Its pathway is amino-acid biosynthesis; L-arginine biosynthesis; L-arginine from L-ornithine and carbamoyl phosphate: step 3/3. The chain is Argininosuccinate lyase from Bacillus licheniformis (strain ATCC 14580 / DSM 13 / JCM 2505 / CCUG 7422 / NBRC 12200 / NCIMB 9375 / NCTC 10341 / NRRL NRS-1264 / Gibson 46).